Consider the following 229-residue polypeptide: Large ribosomal subunit protein uL1 (229 aa).

This sequence belongs to the universal ribosomal protein uL1 family. Part of the 50S ribosomal subunit.

In terms of biological role, binds directly to 23S rRNA. The L1 stalk is quite mobile in the ribosome, and is involved in E site tRNA release. Functionally, protein L1 is also a translational repressor protein, it controls the translation of the L11 operon by binding to its mRNA. The chain is Large ribosomal subunit protein uL1 from Phenylobacterium zucineum (strain HLK1).